Consider the following 291-residue polypeptide: Probable alpha-L-glutamate ligase (291 aa).

The 184-residue stretch at 104–287 folds into the ATP-grasp domain; sequence HQLLASQGID…VAGTIIQHLE (184 aa). ATP is bound by residues Lys-141, 178–179, Asp-187, and 211–213; these read EF and RSN. Positions 248, 260, and 262 each coordinate Mg(2+). 3 residues coordinate Mn(2+): Asp-248, Glu-260, and Asn-262.

This sequence belongs to the RimK family. The cofactor is Mg(2+). Mn(2+) serves as cofactor.

In Xanthomonas campestris pv. campestris (strain 8004), this protein is Probable alpha-L-glutamate ligase.